Consider the following 317-residue polypeptide: Phosphopantothenate--cysteine ligase 1 (317 aa).

This sequence belongs to the PPC synthetase family. As to quaternary structure, homodimer.

The catalysed reaction is (R)-4'-phosphopantothenate + L-cysteine + ATP = N-[(R)-4-phosphopantothenoyl]-L-cysteine + AMP + diphosphate + H(+). Its pathway is cofactor biosynthesis; coenzyme A biosynthesis; CoA from (R)-pantothenate: step 2/5. Functionally, catalyzes the first step in the biosynthesis of coenzyme A from vitamin B5/pantothenate, where cysteine is conjugated to 4'-phosphopantothenate to form 4-phosphopantothenoylcysteine. The catalytic activity is not CTP- but ATP-dependent. This Arabidopsis thaliana (Mouse-ear cress) protein is Phosphopantothenate--cysteine ligase 1 (PPCS1).